The chain runs to 541 residues: Calcium-dependent protein kinase 26 (541 aa).

A compositionally biased stretch (gly residues) spans 1–11; sequence MGQCCTGGGKA. Positions 1-74 are disordered; sequence MGQCCTGGGK…AGPIGEVLER (74 aa). Residue G2 is the site of N-myristoyl glycine attachment. Positions 38 to 67 are enriched in low complexity; sequence AKQQPCSPAAKAAATEAAAAASSSKKPAGP. A Protein kinase domain is found at 83–341; that stretch reads YSIGKELGRG…AFQVLNHPWI (259 aa). ATP-binding positions include 89-97 and K112; that span reads LGRGQFGVT. The active-site Proton acceptor is D207. The segment at 347–377 is autoinhibitory domain; that stretch reads APDVPLDNVVLNRLKQFRAMNQFKKAALRII. EF-hand domains follow at residues 384–419, 420–455, 456–491, and 493–526; these read EEIKGLKEMFKNIDKDNSGTITLEELKNGLAKQGTK, FSDNEIEQLMEAADADGNGIIDYEEFVTATVHMNKM, DREEHLYTAFQYFDKDNSGYITKEELEQALKEQGLY, and ANEIKDVITDADSNNDGRIDYSEFVAMMRKGSGC. The Ca(2+) site is built by D397, D399, S401, T403, E408, D433, D435, N437, E444, D469, D471, S473, Y475, E480, D504, N506, D508, R510, and E515.

This sequence belongs to the protein kinase superfamily. Ser/Thr protein kinase family. CDPK subfamily. As to expression, specifically expressed in heading panicles, spikelets and mature pollen grains. Not expressed in vegetative tissues.

The protein resides in the membrane. The catalysed reaction is L-seryl-[protein] + ATP = O-phospho-L-seryl-[protein] + ADP + H(+). The enzyme catalyses L-threonyl-[protein] + ATP = O-phospho-L-threonyl-[protein] + ADP + H(+). With respect to regulation, activated by calcium. Autophosphorylation may play an important role in the regulation of the kinase activity. In terms of biological role, may play a role in signal transduction pathways that involve calcium as a second messenger. The sequence is that of Calcium-dependent protein kinase 26 from Oryza sativa subsp. japonica (Rice).